The chain runs to 419 residues: UDP-N-acetylglucosamine 1-carboxyvinyltransferase (419 aa).

22 to 23 (KN) contributes to the phosphoenolpyruvate binding site. Arg-92 contributes to the UDP-N-acetyl-alpha-D-glucosamine binding site. Catalysis depends on Cys-116, which acts as the Proton donor. Cys-116 is subject to 2-(S-cysteinyl)pyruvic acid O-phosphothioketal. UDP-N-acetyl-alpha-D-glucosamine contacts are provided by residues 121 to 125 (RPIDQ), Asp-305, and Ile-327.

The protein belongs to the EPSP synthase family. MurA subfamily.

The protein localises to the cytoplasm. The enzyme catalyses phosphoenolpyruvate + UDP-N-acetyl-alpha-D-glucosamine = UDP-N-acetyl-3-O-(1-carboxyvinyl)-alpha-D-glucosamine + phosphate. It participates in cell wall biogenesis; peptidoglycan biosynthesis. In terms of biological role, cell wall formation. Adds enolpyruvyl to UDP-N-acetylglucosamine. This is UDP-N-acetylglucosamine 1-carboxyvinyltransferase from Trichlorobacter lovleyi (strain ATCC BAA-1151 / DSM 17278 / SZ) (Geobacter lovleyi).